The primary structure comprises 406 residues: Dual-specificity RNA methyltransferase RlmN (406 aa).

The active-site Proton acceptor is the Glu-119. The region spanning Asp-125 to Asp-370 is the Radical SAM core domain. A disulfide bridge connects residues Cys-132 and Cys-375. The [4Fe-4S] cluster site is built by Cys-139, Cys-143, and Cys-146. S-adenosyl-L-methionine is bound by residues Gly-192–Glu-193, Ser-224, Ser-246–His-248, and Asn-332. Cys-375 (S-methylcysteine intermediate) is an active-site residue.

This sequence belongs to the radical SAM superfamily. RlmN family. [4Fe-4S] cluster is required as a cofactor.

The protein localises to the cytoplasm. The catalysed reaction is adenosine(2503) in 23S rRNA + 2 reduced [2Fe-2S]-[ferredoxin] + 2 S-adenosyl-L-methionine = 2-methyladenosine(2503) in 23S rRNA + 5'-deoxyadenosine + L-methionine + 2 oxidized [2Fe-2S]-[ferredoxin] + S-adenosyl-L-homocysteine. It catalyses the reaction adenosine(37) in tRNA + 2 reduced [2Fe-2S]-[ferredoxin] + 2 S-adenosyl-L-methionine = 2-methyladenosine(37) in tRNA + 5'-deoxyadenosine + L-methionine + 2 oxidized [2Fe-2S]-[ferredoxin] + S-adenosyl-L-homocysteine. Specifically methylates position 2 of adenine 2503 in 23S rRNA and position 2 of adenine 37 in tRNAs. m2A2503 modification seems to play a crucial role in the proofreading step occurring at the peptidyl transferase center and thus would serve to optimize ribosomal fidelity. The sequence is that of Dual-specificity RNA methyltransferase RlmN from Xylella fastidiosa (strain M12).